The following is a 461-amino-acid chain: Diaboline synthase (461 aa).

Residues H185 and D400 each act as proton acceptor in the active site.

It belongs to the plant acyltransferase family. In terms of assembly, monomer.

Its subcellular location is the cytoplasm. It catalyses the reaction 17,18-epoxy-17-hydroxycur-19-ene + acetyl-CoA = diaboline + CoA. Its pathway is alkaloid biosynthesis. Functionally, acetyltransferase involved in the biosynthesis of curare monoterpene indole alkaloids (MIAs), natural products such as diaboline, a pharmacologically active compound used to regulate blood pressure. Curare alkaloids act as animal glycine receptor antagonists. Catalyzes the conversion of 17,18-epoxy-17-hydroxycur-19-ene (Wieland-Gumlich aldehyde) to diaboline. In Strychnos sp, this protein is Diaboline synthase.